The following is a 199-amino-acid chain: Outer-membrane lipoprotein LolB (199 aa).

The signal sequence occupies residues 1–28 (MAAAGSLCQTAWRVRGWLAAGLCALLAG). A lipid anchor (N-palmitoyl cysteine) is attached at Cys29. Residue Cys29 is the site of S-diacylglycerol cysteine attachment.

The protein belongs to the LolB family. Monomer.

The protein resides in the cell outer membrane. Functionally, plays a critical role in the incorporation of lipoproteins in the outer membrane after they are released by the LolA protein. This Bordetella petrii (strain ATCC BAA-461 / DSM 12804 / CCUG 43448) protein is Outer-membrane lipoprotein LolB.